Reading from the N-terminus, the 43-residue chain is MRDLKTYLSVAPVLSALWFGALAGLLIEINRFFPDALTFPFFS.

The helical transmembrane segment at 7–27 threads the bilayer; that stretch reads YLSVAPVLSALWFGALAGLLI.

Belongs to the PsaJ family.

It localises to the plastid. Its subcellular location is the chloroplast thylakoid membrane. Functionally, may help in the organization of the PsaE and PsaF subunits. The polypeptide is Photosystem I reaction center subunit IX (Oenothera argillicola (Appalachian evening primrose)).